Consider the following 333-residue polypeptide: Protoheme IX farnesyltransferase (333 aa).

7 consecutive transmembrane segments (helical) span residues 64 to 84, 110 to 130, 133 to 153, 161 to 181, 189 to 209, 246 to 266, and 287 to 307; these read LICT…LNCL, TVFL…ISGV, LAAG…TVIL, IVFG…AATG, WLFG…AILL, IMGV…LLPF, and AKSL…LLLI.

Belongs to the UbiA prenyltransferase family. Protoheme IX farnesyltransferase subfamily.

The protein localises to the cell inner membrane. It catalyses the reaction heme b + (2E,6E)-farnesyl diphosphate + H2O = Fe(II)-heme o + diphosphate. It participates in porphyrin-containing compound metabolism; heme O biosynthesis; heme O from protoheme: step 1/1. Converts heme B (protoheme IX) to heme O by substitution of the vinyl group on carbon 2 of heme B porphyrin ring with a hydroxyethyl farnesyl side group. In Prochlorococcus marinus (strain MIT 9312), this protein is Protoheme IX farnesyltransferase.